Here is a 107-residue protein sequence, read N- to C-terminus: MSISISDSAAQRVSAFLNNRGKGLGLRLGVRTSGCSGMAYILEFVDEMNDDDIVFEDKGVKVIIDGKSMVYLDGTELDFVKEGLNEGFKFNNPNVSSECGCGESFNV.

Fe cation-binding residues include C35, C99, and C101.

This sequence belongs to the HesB/IscA family. In terms of assembly, homodimer; may form tetramers and higher multimers. Fe cation is required as a cofactor.

In terms of biological role, is able to transfer iron-sulfur clusters to apo-ferredoxin. Multiple cycles of [2Fe2S] cluster formation and transfer are observed, suggesting that IscA acts catalytically. Recruits intracellular free iron so as to provide iron for the assembly of transient iron-sulfur cluster in IscU in the presence of IscS, L-cysteine and the thioredoxin reductase system TrxA/TrxB. This is Iron-binding protein IscA from Yersinia enterocolitica serotype O:8 / biotype 1B (strain NCTC 13174 / 8081).